The primary structure comprises 467 residues: GTPase Der (467 aa).

2 EngA-type G domains span residues 25–188 and 199–372; these read PVVA…PEAP and RRVA…ASWE. GTP is bound by residues 31–38, 78–82, 140–143, 205–212, 252–256, and 317–320; these read GRPNVGKS, DTGGW, NKAD, DTAGL, and NKWD. One can recognise a KH-like domain in the interval 373–455; it reads TRVPTAQLNA…PIEIAVRPRK (83 aa).

This sequence belongs to the TRAFAC class TrmE-Era-EngA-EngB-Septin-like GTPase superfamily. EngA (Der) GTPase family. Associates with the 50S ribosomal subunit.

In terms of biological role, GTPase that plays an essential role in the late steps of ribosome biogenesis. In Salinispora arenicola (strain CNS-205), this protein is GTPase Der.